Here is a 388-residue protein sequence, read N- to C-terminus: Galactokinase (388 aa).

Position 33 to 36 (33 to 36 (EHTD)) interacts with substrate. ATP is bound by residues Ser67 and 124-130 (GAGLSSS). Positions 130 and 162 each coordinate Mg(2+). Asp174 (proton acceptor) is an active-site residue. Residue Tyr224 participates in substrate binding.

The protein belongs to the GHMP kinase family. GalK subfamily.

The protein resides in the cytoplasm. It carries out the reaction alpha-D-galactose + ATP = alpha-D-galactose 1-phosphate + ADP + H(+). The protein operates within carbohydrate metabolism; galactose metabolism. In terms of biological role, catalyzes the transfer of the gamma-phosphate of ATP to D-galactose to form alpha-D-galactose-1-phosphate (Gal-1-P). In Lacticaseibacillus casei (strain BL23) (Lactobacillus casei), this protein is Galactokinase.